A 475-amino-acid chain; its full sequence is Squamosa promoter-binding-like protein 12 (475 aa).

Residues Asn-49 to Ser-73 are disordered. Positions Gly-51–Ser-73 are enriched in low complexity. The SBP-type zinc finger occupies Ser-177–Pro-254. Residues Cys-180, Cys-185, Cys-202, His-205, Cys-221, Cys-224, His-228, and Cys-240 each contribute to the Zn(2+) site. The short motif at Lys-237–Lys-253 is the Bipartite nuclear localization signal element. A disordered region spans residues Gly-437–His-475. The segment covering Asn-465–His-475 has biased composition (polar residues).

As to expression, expressed in young panicles.

The protein resides in the nucleus. Its function is as follows. Trans-acting factor that binds specifically to the consensus nucleotide sequence 5'-TNCGTACAA-3'. May be involved in panicle development. The protein is Squamosa promoter-binding-like protein 12 (SPL12) of Oryza sativa subsp. indica (Rice).